We begin with the raw amino-acid sequence, 358 residues long: tRNA-specific 2-thiouridylase MnmA (358 aa).

ATP contacts are provided by residues 6 to 13 and Leu32; that span reads AMSGGVDS. Residue Cys101 is the Nucleophile of the active site. Residues Cys101 and Cys193 are joined by a disulfide bond. Gly125 provides a ligand contact to ATP. An interaction with tRNA region spans residues 143 to 145; it reads KDQ. Cys193 acts as the Cysteine persulfide intermediate in catalysis.

Belongs to the MnmA/TRMU family.

The protein resides in the cytoplasm. It carries out the reaction S-sulfanyl-L-cysteinyl-[protein] + uridine(34) in tRNA + AH2 + ATP = 2-thiouridine(34) in tRNA + L-cysteinyl-[protein] + A + AMP + diphosphate + H(+). Functionally, catalyzes the 2-thiolation of uridine at the wobble position (U34) of tRNA, leading to the formation of s(2)U34. The polypeptide is tRNA-specific 2-thiouridylase MnmA (Mycobacterium leprae (strain Br4923)).